Consider the following 241-residue polypeptide: Probable transcriptional regulatory protein azo0574 (241 aa).

A disordered region spans residues Met-1 to Arg-21.

It belongs to the TACO1 family.

It localises to the cytoplasm. The protein is Probable transcriptional regulatory protein azo0574 of Azoarcus sp. (strain BH72).